A 706-amino-acid polypeptide reads, in one-letter code: F-box/WD repeat-containing protein 7 (706 aa).

A disordered region spans residues 1 to 157 (MNQELLSVGS…IVDLPIHQRS (157 aa)). Phosphoserine is present on S26. The segment covering 32 to 54 (QMNRVLEEEQQQPRHQEEEHAAR) has biased composition (basic and acidic residues). The segment covering 69–83 (NDPQQGQLEENNNRF) has biased composition (polar residues). Residues 86-128 (VDEDSSGNQEEQEEDEEHAGEQDEEDEEEEEMDQESDDFDQSD) show a composition bias toward acidic residues. Residues 129 to 138 (DSSREDEHTH) show a composition bias toward basic and acidic residues. Residue T204 is modified to Phosphothreonine. S226 is modified (phosphoserine). An F-box domain is found at 277–323 (RDFISLLPKELALYVLSFLEPKDLLQAAQTCRYWRILAEDNLLWREK). 7 WD repeats span residues 377 to 417 (GHDD…RTLV), 419 to 455 (HTGG…CIHT), 458 to 497 (GHTS…HVLM), 499 to 535 (HVAA…CLHT), 538 to 577 (GHTN…HTLT), 579 to 617 (HQSL…QTLQ), and 621 to 658 (KHQS…FIRN).

As to quaternary structure, homodimer; homodimerization plays a role in substrate binding and/or ubiquitination and degradation. Component of the SCF(FBXW7) complex consisting of CUL1, RBX1, SKP1 and FBXW7. Interacts (via F-box domain) with SKP1. Interacts (via F-box domain) with pseudophosphatase STYX; the interaction is direct and prevents FBXW7 interaction with SKP1. Interacts with cyclin-E (CCNE1 or CCNE2). Interacts with PSEN1. Forms a trimeric complex with NOTCH1 and SGK1. Interacts with NOTCH1 intracellular domain/NICD and NOTCH4 intracellular domain/NICD. Interacts with NOTCH2 intracellular domain (N2ICD). Interacts with MYC (when phosphorylated). Interacts with USP28, counteracting ubiquitination of MYC. Interacts with JUN. Found in a complex with JUN and PRR7. Interacts with JUN and PRR7; the interaction inhibits ubiquitination-mediated JUN degradation, promoting its phosphorylation and transcriptional activity. Interacts (when phosphorylated at Thr-204) with PIN1, disrupting FBXW7 dimerization and promoting FBXW7 autoubiquitination and degradation. Interacts with UBE2QL1. Interacts with FAM83D; promotes FBXW7 degradation. Interacts with MYCN; FBXW7 competes with AURKA for binding to unphosphorylated MYCN but not for binding to phosphorylated MYCN. Interacts with STOML1. Interacts with NFE2L1. Interacts with USP36, counteracting ubiquitination of MYC. Interacts with RICTOR; mediates RICTOR ubiquitination and degradation.l Interacts with USP38, counteracting ubiquitination of MYC. (Microbial infection) In case of infection, interacts with T.annulata PIN1 (TaPIN1); leading to FBXW7 autoubiquitination and subsequent degradation: FBXW7 degradation promotes stabilization of JUN, which promotes cell transformation. Post-translationally, phosphorylation at Thr-204 promotes interaction with PIN1, leading to disrupt FBXW7 dimerization and promoting FBXW7 autoubiquitination and degradation. Phosphorylated by ATM at Ser-26 in response to DNA damage, promoting recruitment to DNA damage sites and 'Lys-63'-linked ubiquitination of phosphorylated XRCC4. Ubiquitinated: autoubiquitinates following phosphorylation at Thr-204 and subsequent interaction with PIN1. Ubiquitination leads to its degradation.

It is found in the nucleus. Its subcellular location is the nucleoplasm. The protein resides in the chromosome. The protein operates within protein modification; protein ubiquitination. Functionally, substrate recognition component of a SCF (SKP1-CUL1-F-box protein) E3 ubiquitin-protein ligase complex which mediates the ubiquitination and subsequent proteasomal degradation of target proteins. Recognizes and binds phosphorylated sites/phosphodegrons within target proteins and thereafter brings them to the SCF complex for ubiquitination. Identified substrates include cyclin-E (CCNE1 or CCNE2), DISC1, JUN, MYC, NOTCH1 released notch intracellular domain (NICD), NOTCH2, MCL1, MLST8, RICTOR, and probably PSEN1. Acts as a negative regulator of JNK signaling by binding to phosphorylated JUN and promoting its ubiquitination and subsequent degradation. SCF(FBXW7) complex mediates the ubiquitination and subsequent degradation of NFE2L1. Involved in bone homeostasis and negative regulation of osteoclast differentiation. Also able to promote 'Lys-63'-linked ubiquitination in response to DNA damage. The SCF(FBXW7) complex facilitates double-strand break repair following phosphorylation by ATM: phosphorylation promotes localization to sites of double-strand breaks and 'Lys-63'-linked ubiquitination of phosphorylated XRCC4, enhancing DNA non-homologous end joining. The polypeptide is F-box/WD repeat-containing protein 7 (Bos taurus (Bovine)).